The sequence spans 310 residues: Hairy/enhancer-of-split related with YRPW motif-like protein (310 aa).

Residues 1-21 (MKRPHDYSSPDSDTDELIDVG) are disordered. The segment covering 12 to 21 (SDTDELIDVG) has biased composition (acidic residues). Positions 43 to 98 (ARKKRRGIIEKRRRDRINHSLSELRRLVPSAFEKQGSSKLEKAEILQMTVDHLKLL) constitute a bHLH domain. The Orange domain maps to 116–152 (YRTLGFRECVGEVVRYLSSLEGVESSDPIGARLVSHL). Low complexity-rich tracts occupy residues 182 to 192 (LQAASPPASST) and 261 to 273 (PSSSSSSSNSSPP). 2 disordered regions span residues 182–208 (LQAASPPASSTPFPPNARRDLAPHGTA) and 248–310 (HRLQ…IGAF). Residues 293–302 (LSSSSKSAQA) are compositionally biased toward polar residues.

This sequence belongs to the HEY family.

The protein resides in the nucleus. Its function is as follows. Transcriptional repressor which functions as a downstream effector of Notch signaling. The protein is Hairy/enhancer-of-split related with YRPW motif-like protein (heyl) of Danio rerio (Zebrafish).